We begin with the raw amino-acid sequence, 287 residues long: Lys-63-specific deubiquitinase (287 aa).

One can recognise an MPN domain in the interval 33–176 (VHLESDAFLV…YTCFQSVQAQ (144 aa)). The Zn(2+) site is built by His119, His121, and Asp132. The short motif at 119-132 (HSHPHITVWPSHVD) is the JAMM motif element. Positions 256 to 283 (LQWLEDRLEQNKQSIITLQKEKELLTQE) form a coiled coil.

The protein belongs to the peptidase M67A family. BRCC36 subfamily. As to quaternary structure, monomer. Homodimer. Component of the BRISC complex, at least composed of abraxas2, brcc3, babam1 and babam2. Interacts with abraxas2; the interaction is direct and may form a heterotetramer. Component of the BRCA1-A complex. Both the BRCA1-A complex and the BRISC complex bind polyubiquitin. Zn(2+) is required as a cofactor.

Its subcellular location is the nucleus. It is found in the cytoplasm. It localises to the cytoskeleton. The protein resides in the spindle pole. In terms of biological role, metalloprotease that specifically cleaves 'Lys-63'-linked polyubiquitin chains, leaving the last ubiquitin chain attached to its substrates. Catalytic subunit of the BRISC complex, a multiprotein complex that specifically cleaves 'Lys-63'-linked ubiquitin in various substrates; brcc3 does not have activity by itself, but needs to be associated into a higher-order assembly, for minimal in vitro activity. The protein is Lys-63-specific deubiquitinase of Danio rerio (Zebrafish).